We begin with the raw amino-acid sequence, 138 residues long: 16 kDa phloem protein 2 (138 aa).

The C2 domain occupies 1 to 108 (MGMGMMEVHL…LAEGVRKGWS (108 aa)). Ca(2+) is bound by residues aspartate 20, aspartate 27, aspartate 78, aspartate 80, and aspartate 86.

Requires Ca(2+) as cofactor. In terms of tissue distribution, sieve elements of leaves, stems, roots and flowers.

Its function is as follows. Binds to both sense and antisense RNA. Interacts with mesophyll plasmodesmata to mediate its own cell-to-cell transport and potentiate RNA trafficking. The protein is 16 kDa phloem protein 2 (PP16-2) of Cucurbita maxima (Pumpkin).